Here is a 338-residue protein sequence, read N- to C-terminus: Ketol-acid reductoisomerase (NADP(+)) (338 aa).

The 181-residue stretch at 1–181 (MKVFYDKDCD…GGGRAGIIET (181 aa)) folds into the KARI N-terminal Rossmann domain. Residues 24 to 27 (YGSQ), Arg47, and Ser52 each bind NADP(+). His107 is an active-site residue. Gly133 is a binding site for NADP(+). Positions 182-327 (NFREETETDL…AKLRAMMPWI (146 aa)) constitute a KARI C-terminal knotted domain. Mg(2+)-binding residues include Asp190, Glu194, Glu226, and Glu230. Ser251 provides a ligand contact to substrate.

The protein belongs to the ketol-acid reductoisomerase family. The cofactor is Mg(2+).

The enzyme catalyses (2R)-2,3-dihydroxy-3-methylbutanoate + NADP(+) = (2S)-2-acetolactate + NADPH + H(+). It catalyses the reaction (2R,3R)-2,3-dihydroxy-3-methylpentanoate + NADP(+) = (S)-2-ethyl-2-hydroxy-3-oxobutanoate + NADPH + H(+). It participates in amino-acid biosynthesis; L-isoleucine biosynthesis; L-isoleucine from 2-oxobutanoate: step 2/4. Its pathway is amino-acid biosynthesis; L-valine biosynthesis; L-valine from pyruvate: step 2/4. Involved in the biosynthesis of branched-chain amino acids (BCAA). Catalyzes an alkyl-migration followed by a ketol-acid reduction of (S)-2-acetolactate (S2AL) to yield (R)-2,3-dihydroxy-isovalerate. In the isomerase reaction, S2AL is rearranged via a Mg-dependent methyl migration to produce 3-hydroxy-3-methyl-2-ketobutyrate (HMKB). In the reductase reaction, this 2-ketoacid undergoes a metal-dependent reduction by NADPH to yield (R)-2,3-dihydroxy-isovalerate. In Janthinobacterium sp. (strain Marseille) (Minibacterium massiliensis), this protein is Ketol-acid reductoisomerase (NADP(+)).